Here is a 380-residue protein sequence, read N- to C-terminus: Probable polyglutamine synthesis accessory protein MT0602 (380 aa).

The protein belongs to the CapA family.

Could be involved in the biosynthesis, transport or localization of poly-alpha-L-glutamine (PLG), a cell wall component. Contributes to stress tolerance and virulence. This Mycobacterium tuberculosis (strain CDC 1551 / Oshkosh) protein is Probable polyglutamine synthesis accessory protein MT0602.